We begin with the raw amino-acid sequence, 342 residues long: Holliday junction branch migration complex subunit RuvB (342 aa).

Residues 1-181 (MENRMVTPFD…FGMLCAMEFY (181 aa)) are large ATPase domain (RuvB-L). ATP is bound by residues Leu20, Arg21, Gly62, Lys65, Thr66, Thr67, 128–130 (EDY), Arg171, Tyr181, and Arg218. A Mg(2+)-binding site is contributed by Thr66. Residues 182–252 (TDEELMEIVV…GAKAALDLLE (71 aa)) form a small ATPAse domain (RuvB-S) region. The interval 255-342 (KEGLDKIDNK…KDNQVSIFNK (88 aa)) is head domain (RuvB-H). Residues Arg310 and Arg315 each contribute to the DNA site.

This sequence belongs to the RuvB family. In terms of assembly, homohexamer. Forms an RuvA(8)-RuvB(12)-Holliday junction (HJ) complex. HJ DNA is sandwiched between 2 RuvA tetramers; dsDNA enters through RuvA and exits via RuvB. An RuvB hexamer assembles on each DNA strand where it exits the tetramer. Each RuvB hexamer is contacted by two RuvA subunits (via domain III) on 2 adjacent RuvB subunits; this complex drives branch migration. In the full resolvosome a probable DNA-RuvA(4)-RuvB(12)-RuvC(2) complex forms which resolves the HJ.

The protein localises to the cytoplasm. It carries out the reaction ATP + H2O = ADP + phosphate + H(+). In terms of biological role, the RuvA-RuvB-RuvC complex processes Holliday junction (HJ) DNA during genetic recombination and DNA repair, while the RuvA-RuvB complex plays an important role in the rescue of blocked DNA replication forks via replication fork reversal (RFR). RuvA specifically binds to HJ cruciform DNA, conferring on it an open structure. The RuvB hexamer acts as an ATP-dependent pump, pulling dsDNA into and through the RuvAB complex. RuvB forms 2 homohexamers on either side of HJ DNA bound by 1 or 2 RuvA tetramers; 4 subunits per hexamer contact DNA at a time. Coordinated motions by a converter formed by DNA-disengaged RuvB subunits stimulates ATP hydrolysis and nucleotide exchange. Immobilization of the converter enables RuvB to convert the ATP-contained energy into a lever motion, pulling 2 nucleotides of DNA out of the RuvA tetramer per ATP hydrolyzed, thus driving DNA branch migration. The RuvB motors rotate together with the DNA substrate, which together with the progressing nucleotide cycle form the mechanistic basis for DNA recombination by continuous HJ branch migration. Branch migration allows RuvC to scan DNA until it finds its consensus sequence, where it cleaves and resolves cruciform DNA. The polypeptide is Holliday junction branch migration complex subunit RuvB (Clostridium botulinum (strain ATCC 19397 / Type A)).